The chain runs to 677 residues: MFVKLKLIFFFFLLCQIMISSSQNLNFTYNGFHPPLTDISLQGLATVTPNGLLKLTNTSVQKTGHAFCTERIRFKDSQNGNVSSFSTTFVFAIHSQIPTLSGHGIAFVVAPTLGLPFALPSQYIGLFNISNNGNDTNHIFAVEFDTIQSSEFGDPNDNHVGIDLNGLRSANYSTAGYRDDHDKFQNLSLISRKRIQVWIDYDNRSHRIDVTVAPFDSDKPRKPLVSYVRDLSSILLEDMYVGFSSATGSVLSEHFLVGWSFRLNGEAPMLSLSKLPKLPRFEPRRISEFYKIGMPLISLSLIFSIIFLAFYIVRRKKKYEEELDDWETEFGKNRFRFKELYHATKGFKEKDLLGSGGFGRVYRGILPTTKLEVAVKRVSHDSKQGMKEFVAEIVSIGRMSHRNLVPLLGYCRRRGELLLVYDYMPNGSLDKYLYNNPETTLDWKQRSTIIKGVASGLFYLHEEWEQVVIHRDVKASNVLLDADFNGRLGDFGLARLYDHGSDPQTTHVVGTLGYLAPEHSRTGRATTTTDVYAFGAFLLEVVSGRRPIEFHSASDDTFLLVEWVFSLWLRGNIMEAKDPKLGSSGYDLEEVEMVLKLGLLCSHSDPRARPSMRQVLQYLRGDMALPELTPLDLSAGSVMNLGGRDGFSGIAMTDFSTVFKGFTGGSSIADSLLSGGR.

The N-terminal stretch at 1–22 (MFVKLKLIFFFFLLCQIMISSS) is a signal peptide. Residues 23–291 (QNLNFTYNGF…EPRRISEFYK (269 aa)) are Extracellular-facing. Residues 24-262 (NLNFTYNGFH…EHFLVGWSFR (239 aa)) form a legume-lectin like region. Asn-26, Asn-57, Asn-81, Asn-128, Asn-134, Asn-171, Asn-186, and Asn-203 each carry an N-linked (GlcNAc...) asparagine glycan. The chain crosses the membrane as a helical span at residues 292 to 312 (IGMPLISLSLIFSIIFLAFYI). The Cytoplasmic portion of the chain corresponds to 313–677 (VRRKKKYEEE…IADSLLSGGR (365 aa)). One can recognise a Protein kinase domain in the interval 347–625 (FKEKDLLGSG…LQYLRGDMAL (279 aa)). Residues 353–361 (LGSGGFGRV) and Lys-376 each bind ATP. The Proton acceptor role is filled by Asp-472.

This sequence in the C-terminal section; belongs to the protein kinase superfamily. Ser/Thr protein kinase family. The protein in the N-terminal section; belongs to the leguminous lectin family.

Its subcellular location is the cell membrane. The enzyme catalyses L-seryl-[protein] + ATP = O-phospho-L-seryl-[protein] + ADP + H(+). It catalyses the reaction L-threonyl-[protein] + ATP = O-phospho-L-threonyl-[protein] + ADP + H(+). Required during pollen development. Its function is as follows. Involved in resistance response to the pathogenic bacteria Pseudomonas syringae. This is L-type lectin-domain containing receptor kinase IV.2 from Arabidopsis thaliana (Mouse-ear cress).